Here is a 152-residue protein sequence, read N- to C-terminus: UPF0178 protein YaiI (152 aa).

It belongs to the UPF0178 family.

The polypeptide is UPF0178 protein YaiI (Shigella boydii serotype 18 (strain CDC 3083-94 / BS512)).